Consider the following 300-residue polypeptide: 33 kDa chaperonin (300 aa).

Disulfide bonds link cysteine 235-cysteine 237 and cysteine 269-cysteine 272.

It belongs to the HSP33 family. Post-translationally, under oxidizing conditions two disulfide bonds are formed involving the reactive cysteines. Under reducing conditions zinc is bound to the reactive cysteines and the protein is inactive.

Its subcellular location is the cytoplasm. Functionally, redox regulated molecular chaperone. Protects both thermally unfolding and oxidatively damaged proteins from irreversible aggregation. Plays an important role in the bacterial defense system toward oxidative stress. The sequence is that of 33 kDa chaperonin from Pseudomonas fluorescens (strain SBW25).